The primary structure comprises 81 residues: Photosystem I iron-sulfur center (81 aa).

2 4Fe-4S ferredoxin-type domains span residues 2-31 (AHAV…MIPW) and 39-68 (IASA…VRVY). Residues Cys11, Cys14, Cys17, Cys21, Cys48, Cys51, Cys54, and Cys58 each coordinate [4Fe-4S] cluster.

As to quaternary structure, the eukaryotic PSI reaction center is composed of at least 11 subunits. Requires [4Fe-4S] cluster as cofactor.

The protein resides in the plastid. It localises to the chloroplast thylakoid membrane. The enzyme catalyses reduced [plastocyanin] + hnu + oxidized [2Fe-2S]-[ferredoxin] = oxidized [plastocyanin] + reduced [2Fe-2S]-[ferredoxin]. Its function is as follows. Apoprotein for the two 4Fe-4S centers FA and FB of photosystem I (PSI); essential for photochemical activity. FB is the terminal electron acceptor of PSI, donating electrons to ferredoxin. The C-terminus interacts with PsaA/B/D and helps assemble the protein into the PSI complex. Required for binding of PsaD and PsaE to PSI. PSI is a plastocyanin-ferredoxin oxidoreductase, converting photonic excitation into a charge separation, which transfers an electron from the donor P700 chlorophyll pair to the spectroscopically characterized acceptors A0, A1, FX, FA and FB in turn. The protein is Photosystem I iron-sulfur center of Marchantia polymorpha (Common liverwort).